The primary structure comprises 985 residues: Guanine nucleotide exchange protein smcr8b (985 aa).

One can recognise a uDENN FLCN/SMCR8-type domain in the interval 47-225 (ISSAKLKKDF…VKCSSEREPI (179 aa)). The span at 242–292 (NEKSSHTDEISPQEKDGCGNSRKVEVKLENENRSHFEHEQYGKQRKDKPDK) shows a compositional bias: basic and acidic residues. 3 disordered regions span residues 242–301 (NEKS…PLAN), 502–528 (QSQV…SPAE), and 639–659 (EESP…EDNN). One can recognise a cDENN FLCN/SMCR8-type domain in the interval 390–895 (RLKTLEELCD…LINLLVEPKS (506 aa)). The span at 502-514 (QSQVQHSTLNTPS) shows a compositional bias: polar residues. A dDENN FLCN/SMCR8-type domain is found at 904–962 (FTFAQSVQSKLVTKAFLLTFSHGHPSPSRPQGSSGTECFLSELHTDDKKILRYLSELIK).

This sequence belongs to the SMCR8 family. In terms of assembly, component of the C9orf72-SMCR8 complex. The C9orf72-SMCR8 complex associates with the ATG1/ULK1 kinase complex.

It is found in the cytoplasm. The protein localises to the nucleus. Its function is as follows. Component of the C9orf72-SMCR8 complex, a complex that has guanine nucleotide exchange factor (GEF) activity and regulates autophagy. In the complex, C9orf72 and SMCR8 probably constitute the catalytic subunits that promote the exchange of GDP to GTP, converting inactive GDP-bound RAB8A and RAB39B into their active GTP-bound form, thereby promoting autophagosome maturation. The C9orf72-SMCR8 complex also acts as a negative regulator of autophagy initiation by interacting with the ATG1/ULK1 kinase complex and inhibiting its protein kinase activity. This Danio rerio (Zebrafish) protein is Guanine nucleotide exchange protein smcr8b (smcr8b).